Here is a 227-residue protein sequence, read N- to C-terminus: Ribose-5-phosphate isomerase A (227 aa).

Substrate-binding positions include 28–31, 81–84, and 94–97; these read TGST, DGAD, and KGGG. The active-site Proton acceptor is the glutamate 103. Lysine 121 serves as a coordination point for substrate.

It belongs to the ribose 5-phosphate isomerase family. Homodimer.

The catalysed reaction is aldehydo-D-ribose 5-phosphate = D-ribulose 5-phosphate. It participates in carbohydrate degradation; pentose phosphate pathway; D-ribose 5-phosphate from D-ribulose 5-phosphate (non-oxidative stage): step 1/1. Catalyzes the reversible conversion of ribose-5-phosphate to ribulose 5-phosphate. In Caulobacter vibrioides (strain ATCC 19089 / CIP 103742 / CB 15) (Caulobacter crescentus), this protein is Ribose-5-phosphate isomerase A.